The chain runs to 191 residues: UPF0398 protein LCABL_17010 (191 aa).

It belongs to the UPF0398 family.

The polypeptide is UPF0398 protein LCABL_17010 (Lacticaseibacillus casei (strain BL23) (Lactobacillus casei)).